A 357-amino-acid polypeptide reads, in one-letter code: U5 small nuclear ribonucleoprotein 40 kDa protein (357 aa).

A Glycyl lysine isopeptide (Lys-Gly) (interchain with G-Cter in SUMO2) cross-link involves residue lysine 18. Arginine 21 bears the Asymmetric dimethylarginine mark. WD repeat units follow at residues 64–103, 107–146, 149–189, 191–230, 233–272, 283–322, and 325–357; these read GHEGEVYCCKFHPNGSTLASAGFDRLILLWNVYGDCGNYA, GYSGAVMELHYNTDGSMLFSASTDKTVAVWDSETGERVKR, GHTS…AIQT, QNTYQVLAVTFNDTSDQIISGGIDNDIKVWDLRQNKLTYT, GHADSVTGLSLSSEGSYLLSNAMDNTVRVWDVRPFAPKER, NFEKNLLRCSWSPDGSKIAAGSADRSVCVWDTTSRRILYK, and GHAGSINEVAFHPDEPIIISASSDKRLYMGEIQ. Lysine 270 is covalently cross-linked (Glycyl lysine isopeptide (Lys-Gly) (interchain with G-Cter in SUMO2)).

In terms of assembly, component of the pre-catalytic and catalytic spliceosome complexes. Component of the postcatalytic spliceosome P complex. Part of the U5 snRNP complex. Interacts with PRPF8. Component of the U4/U6-U5 tri-snRNP complex composed of the U4, U6 and U5 snRNAs and at least PRPF3, PRPF4, PRPF6, PRPF8, PRPF31, SNRNP200, TXNL4A, WDR57, SNRNP40, DDX23, CD2BP2, PPIH, SNU13, EFTUD2, SART1 and USP39. Component of the minor spliceosome, which splices U12-type introns.

It localises to the nucleus. In terms of biological role, required for pre-mRNA splicing as component of the activated spliceosome. Component of the U5 small nuclear ribonucleoprotein (snRNP) complex and the U4/U6-U5 tri-snRNP complex, building blocks of the spliceosome. As a component of the minor spliceosome, involved in the splicing of U12-type introns in pre-mRNAs. In Pongo abelii (Sumatran orangutan), this protein is U5 small nuclear ribonucleoprotein 40 kDa protein (SNRNP40).